The following is a 974-amino-acid chain: UvrABC system protein A (974 aa).

34 to 41 contacts ATP; sequence GLSGSGKS. ABC transporter domains lie at 331-610 and 630-959; these read WARS…TNSL and ISKT…QFLK. 663 to 670 is an ATP binding site; sequence GVSGGGKS. The segment at 762–788 adopts a C4-type zinc-finger fold; sequence CEACQGDGVIKIEMHFLPDVYVTCDVC.

Belongs to the ABC transporter superfamily. UvrA family. In terms of assembly, forms a heterotetramer with UvrB during the search for lesions.

It localises to the cytoplasm. The UvrABC repair system catalyzes the recognition and processing of DNA lesions. UvrA is an ATPase and a DNA-binding protein. A damage recognition complex composed of 2 UvrA and 2 UvrB subunits scans DNA for abnormalities. When the presence of a lesion has been verified by UvrB, the UvrA molecules dissociate. The sequence is that of UvrABC system protein A from Brucella abortus (strain 2308).